A 956-amino-acid chain; its full sequence is Lon protease homolog, mitochondrial 1 (956 aa).

Disordered stretches follow at residues 37–57 (NNNNNNNNNNNNNNNNNNNNN) and 83–123 (KKKG…GNEK). Basic and acidic residues predominate over residues 91–123 (NNDDNDNEKNEKNEKKVKNEKKEKNEKNDGNEK). Positions 159 to 357 (VVIYPSNSVN…MLYHMILNEQ (199 aa)) constitute a Lon N-terminal domain. 511–518 (GPPGTGKT) is an ATP binding site. The region spanning 747–945 (VTPIGVVNGL…KDVFEVAFPN (199 aa)) is the Lon proteolytic domain. The span at 777–795 (KPLSSLPPSQQQQNQLEPS) shows a compositional bias: low complexity. Positions 777-800 (KPLSSLPPSQQQQNQLEPSIKTTG) are disordered. Catalysis depends on residues S851 and K894.

The protein belongs to the peptidase S16 family. Homohexamer or homoheptamer. Organized in a ring with a central cavity.

The protein resides in the mitochondrion matrix. It carries out the reaction Hydrolysis of proteins in presence of ATP.. In terms of biological role, ATP-dependent serine protease that mediates the selective degradation of misfolded, unassembled or oxidatively damaged polypeptides as well as certain short-lived regulatory proteins in the mitochondrial matrix. May also have a chaperone function in the assembly of inner membrane protein complexes. Participates in the regulation of mitochondrial gene expression and in the maintenance of the integrity of the mitochondrial genome. Binds to mitochondrial DNA in a site-specific manner. This is Lon protease homolog, mitochondrial 1 from Dictyostelium discoideum (Social amoeba).